We begin with the raw amino-acid sequence, 154 residues long: SsrA-binding protein (154 aa).

This sequence belongs to the SmpB family.

It localises to the cytoplasm. Required for rescue of stalled ribosomes mediated by trans-translation. Binds to transfer-messenger RNA (tmRNA), required for stable association of tmRNA with ribosomes. tmRNA and SmpB together mimic tRNA shape, replacing the anticodon stem-loop with SmpB. tmRNA is encoded by the ssrA gene; the 2 termini fold to resemble tRNA(Ala) and it encodes a 'tag peptide', a short internal open reading frame. During trans-translation Ala-aminoacylated tmRNA acts like a tRNA, entering the A-site of stalled ribosomes, displacing the stalled mRNA. The ribosome then switches to translate the ORF on the tmRNA; the nascent peptide is terminated with the 'tag peptide' encoded by the tmRNA and targeted for degradation. The ribosome is freed to recommence translation, which seems to be the essential function of trans-translation. This chain is SsrA-binding protein, found in Solidesulfovibrio magneticus (strain ATCC 700980 / DSM 13731 / RS-1) (Desulfovibrio magneticus).